Reading from the N-terminus, the 197-residue chain is MSRIGRVERATNETKVFVEVNLDGTGAADISTGVGFYDHMLHQIAKHGLFDLTVRTEGDLHIDAHHTMEDTALALGAAFREALGDRSGIRRFADAKVPLDEALAEVTVDISGRPYLVHSEPEGMAPMIGRDYDTTMTRHIFESFVAQARITLHVHVPYGRIPHHIVECQFKAVARALRSACERDPRVTGVPSTKGTL.

It belongs to the imidazoleglycerol-phosphate dehydratase family.

It localises to the cytoplasm. The catalysed reaction is D-erythro-1-(imidazol-4-yl)glycerol 3-phosphate = 3-(imidazol-4-yl)-2-oxopropyl phosphate + H2O. It functions in the pathway amino-acid biosynthesis; L-histidine biosynthesis; L-histidine from 5-phospho-alpha-D-ribose 1-diphosphate: step 6/9. This chain is Imidazoleglycerol-phosphate dehydratase, found in Thermobifida fusca (strain YX).